Here is a 149-residue protein sequence, read N- to C-terminus: Transcriptional repressor NrdR (149 aa).

A zinc finger lies at 3 to 34 (CPFCSAVDTKVIDSRLVGEGSQVRRRRQCLVC). The ATP-cone domain maps to 49-139 (PRVIKSNEVR…VYRSFEDIRE (91 aa)).

This sequence belongs to the NrdR family. Zn(2+) serves as cofactor.

Negatively regulates transcription of bacterial ribonucleotide reductase nrd genes and operons by binding to NrdR-boxes. This chain is Transcriptional repressor NrdR, found in Pectobacterium atrosepticum (strain SCRI 1043 / ATCC BAA-672) (Erwinia carotovora subsp. atroseptica).